We begin with the raw amino-acid sequence, 89 residues long: Protein S100-A6 (89 aa).

EF-hand domains lie at 12 to 47 and 48 to 83; these read LVAI…IGSK and LQDA…LALI. The Ca(2+) site is built by Thr28 and Glu33. Residue Lys40 is modified to N6-acetyllysine. Ser46 carries the phosphoserine modification. Lys47 is modified (N6-acetyllysine; alternate). At Lys47 the chain carries N6-succinyllysine; alternate. Ca(2+)-binding residues include Asp61, Asn63, Asp65, Glu67, and Glu72.

The protein belongs to the S-100 family. In terms of assembly, homodimer; head to tail assembly of 2 subunits. Interacts with CACYBP in a calcium-dependent manner. Interacts with ANXA2 and ANXA11 (via N-terminus). Interacts with SUGT1. Interacts with TP53; has higher affinity for TP53 that is phosphorylated on its N-terminal domain, and lower affinity for TP53 that is phosphorylated on its C-terminal domain. Interacts with tropomyosin. Interacts with FKBP4. Interacts with PPP5C (via TPR repeats); the interaction is calcium-dependent and modulates PPP5C activity. Interacts with TPPP; this interaction inhibits TPPP dimerization.

The protein resides in the nucleus envelope. It is found in the cytoplasm. Its subcellular location is the cell membrane. May function as calcium sensor and modulator, contributing to cellular calcium signaling. May function by interacting with other proteins, such as TPR-containing proteins, and indirectly play a role in many physiological processes such as the reorganization of the actin cytoskeleton and in cell motility. Binds 2 calcium ions. Calcium binding is cooperative. This is Protein S100-A6 (S100a6) from Mus musculus (Mouse).